The sequence spans 1048 residues: Putative helicase/primase complex protein (1048 aa).

The segment at 1025–1048 (STKEESSPTREETSSIKEKTFTET) is disordered.

This sequence belongs to the asfivirus F1055L family.

In terms of biological role, may be involved in DNA replication. This chain is Putative helicase/primase complex protein, found in African swine fever virus (isolate Pig/Kenya/KEN-50/1950) (ASFV).